The following is a 227-amino-acid chain: MGQKVNPVGMRIGITRDWTSNWYADKKDFADRLNEDLNVRQLLQKRLKGAAVSRIQIERPARNAKIIIHSARPGVIIGKKGGEIEALRDEIFKVMKVPVHITIEEVRKPELDAKLVAENIAQQLERRVMFRRAMKRAVQNTLRQGALGVKISVSGRLGGAEIARTEWYREGRVPLHTFRADIDYATASAKTTYGIIGVKVWIFKGEVHAPKPQAEEAAPQETEEEVK.

The KH type-2 domain occupies 39-107 (VRQLLQKRLK…PVHITIEEVR (69 aa)).

This sequence belongs to the universal ribosomal protein uS3 family. In terms of assembly, part of the 30S ribosomal subunit. Forms a tight complex with proteins S10 and S14.

Functionally, binds the lower part of the 30S subunit head. Binds mRNA in the 70S ribosome, positioning it for translation. The polypeptide is Small ribosomal subunit protein uS3 (rpsC) (Coxiella burnetii (strain RSA 493 / Nine Mile phase I)).